A 126-amino-acid polypeptide reads, in one-letter code: Large ribosomal subunit protein bL12 (126 aa).

The span at 104-116 shows a compositional bias: basic and acidic residues; that stretch reads AKKEDAEKAKAQL. A disordered region spans residues 104 to 126; the sequence is AKKEDAEKAKAQLEEAGATVELK. Positions 117 to 126 are enriched in low complexity; sequence EEAGATVELK.

This sequence belongs to the bacterial ribosomal protein bL12 family. As to quaternary structure, homodimer. Part of the ribosomal stalk of the 50S ribosomal subunit. Forms a multimeric L10(L12)X complex, where L10 forms an elongated spine to which 2 to 4 L12 dimers bind in a sequential fashion. Binds GTP-bound translation factors.

Forms part of the ribosomal stalk which helps the ribosome interact with GTP-bound translation factors. Is thus essential for accurate translation. The polypeptide is Large ribosomal subunit protein bL12 (Bifidobacterium animalis subsp. lactis (strain AD011)).